The sequence spans 601 residues: Elongation factor 4 (601 aa).

Positions 7–189 (SNIRNFSIVA…AIVHRLPPPQ (183 aa)) constitute a tr-type G domain. GTP-binding positions include 19–24 (DHGKST) and 136–139 (NKVD).

This sequence belongs to the TRAFAC class translation factor GTPase superfamily. Classic translation factor GTPase family. LepA subfamily.

The protein localises to the cell inner membrane. The catalysed reaction is GTP + H2O = GDP + phosphate + H(+). In terms of biological role, required for accurate and efficient protein synthesis under certain stress conditions. May act as a fidelity factor of the translation reaction, by catalyzing a one-codon backward translocation of tRNAs on improperly translocated ribosomes. Back-translocation proceeds from a post-translocation (POST) complex to a pre-translocation (PRE) complex, thus giving elongation factor G a second chance to translocate the tRNAs correctly. Binds to ribosomes in a GTP-dependent manner. The protein is Elongation factor 4 of Rhodopseudomonas palustris (strain BisB18).